The primary structure comprises 405 residues: 4-hydroxy-3-methylbut-2-en-1-yl diphosphate synthase (flavodoxin) (405 aa).

[4Fe-4S] cluster contacts are provided by C297, C300, C343, and E350.

This sequence belongs to the IspG family. Requires [4Fe-4S] cluster as cofactor.

It carries out the reaction (2E)-4-hydroxy-3-methylbut-2-enyl diphosphate + oxidized [flavodoxin] + H2O + 2 H(+) = 2-C-methyl-D-erythritol 2,4-cyclic diphosphate + reduced [flavodoxin]. It participates in isoprenoid biosynthesis; isopentenyl diphosphate biosynthesis via DXP pathway; isopentenyl diphosphate from 1-deoxy-D-xylulose 5-phosphate: step 5/6. In terms of biological role, converts 2C-methyl-D-erythritol 2,4-cyclodiphosphate (ME-2,4cPP) into 1-hydroxy-2-methyl-2-(E)-butenyl 4-diphosphate. The sequence is that of 4-hydroxy-3-methylbut-2-en-1-yl diphosphate synthase (flavodoxin) from Francisella tularensis subsp. novicida (strain U112).